The chain runs to 293 residues: Transcriptional regulator ICP22 homolog (293 aa).

Disordered regions lie at residues 1 to 49 (MPHG…QRID) and 175 to 293 (RFLE…SARR). The span at 21 to 31 (TPSTSPLIPSL) shows a compositional bias: low complexity. The span at 190-210 (EECDVSGDESPSEEEEEDEAS) shows a compositional bias: acidic residues. Over residues 272–281 (AAKKRRKRQP) the composition is skewed to basic residues. The span at 282-293 (PKGERPTKSARR) shows a compositional bias: basic and acidic residues.

The protein belongs to the herpesviridae ICP22 family.

This Equus caballus (Horse) protein is Transcriptional regulator ICP22 homolog (IR4).